A 274-amino-acid chain; its full sequence is Energy-coupling factor transporter ATP-binding protein EcfA1 (274 aa).

Residues 10 to 241 (ASFQGVYFSY…AAELQKIRLD (232 aa)) form the ABC transporter domain. ATP is bound at residue 42-49 (GHNGSGKS).

Belongs to the ABC transporter superfamily. Energy-coupling factor EcfA family. In terms of assembly, forms a stable energy-coupling factor (ECF) transporter complex composed of 2 membrane-embedded substrate-binding proteins (S component), 2 ATP-binding proteins (A component) and 2 transmembrane proteins (T component).

Its subcellular location is the cell membrane. Its function is as follows. ATP-binding (A) component of a common energy-coupling factor (ECF) ABC-transporter complex. Unlike classic ABC transporters this ECF transporter provides the energy necessary to transport a number of different substrates. The polypeptide is Energy-coupling factor transporter ATP-binding protein EcfA1 (Mycoplasma pneumoniae (strain ATCC 29342 / M129 / Subtype 1) (Mycoplasmoides pneumoniae)).